The primary structure comprises 319 residues: MMILAWCIAWVLDFIIGDPQHWPHPVRWIGRLITFVQRIVRRYCPGDKALRIGGGVMWVVVVGATWGVAWGVLALAQRIHPWFGWSVEVWMIFTTLAGRSLARAAQEVERPLRENDLAESRIKLSWIVGRDTSQLQPAQINRAVVETVAENTVDGIIAPLFFLFLGGAPLAMAYKAVNTLDSMVGYKHEKYRAIGMVSARMDDVANYLPARLSWLLLGIAAGLCRLSGWRALRIGWRDRYNHSSPNCAWSEACVAGALGIQLGGPNNYFGERVDKPWIGDAQRDISVDDISRTIRLMWVASTLALALFIAARCGLSGLA.

5 helical membrane passes run 56–76, 82–102, 153–173, 204–224, and 296–316; these read VMWV…LALA, WFGW…RSLA, VDGI…LAMA, VANY…AGLC, and LMWV…CGLS.

The protein belongs to the CobD/CbiB family.

The protein resides in the cell membrane. It functions in the pathway cofactor biosynthesis; adenosylcobalamin biosynthesis. In terms of biological role, converts cobyric acid to cobinamide by the addition of aminopropanol on the F carboxylic group. However, the true cosubstrate could be (R)-1-amino-2-propanol O-2-phosphate, leading to cobinamide phosphate. In Salmonella choleraesuis (strain SC-B67), this protein is Cobalamin biosynthesis protein CbiB.